We begin with the raw amino-acid sequence, 261 residues long: Segregation and condensation protein A (261 aa).

Belongs to the ScpA family. As to quaternary structure, component of a cohesin-like complex composed of ScpA, ScpB and the Smc homodimer, in which ScpA and ScpB bind to the head domain of Smc. The presence of the three proteins is required for the association of the complex with DNA.

The protein resides in the cytoplasm. In terms of biological role, participates in chromosomal partition during cell division. May act via the formation of a condensin-like complex containing Smc and ScpB that pull DNA away from mid-cell into both cell halves. This is Segregation and condensation protein A from Desulfitobacterium hafniense (strain DSM 10664 / DCB-2).